The primary structure comprises 179 residues: uncharacterized protein (179 aa).

The segment covering 1 to 10 (ATLSAGQPAS) has biased composition (polar residues). Disordered regions lie at residues 1–35 (ATLS…RGKC), 59–80 (VRRN…PIVT), and 131–179 (ECPT…STCR). A compositionally biased stretch (basic residues) spans 23–33 (LHRHPAPKRRG). A compositionally biased stretch (basic residues) spans 149–158 (TPSRVRRSRR).

This is an uncharacterized protein from Human cytomegalovirus (strain AD169) (HHV-5).